A 290-amino-acid chain; its full sequence is 4-hydroxybenzoate octaprenyltransferase (290 aa).

6 consecutive transmembrane segments (helical) span residues 33–53 (LWAL…AVFV), 99–119 (LFVI…VKTI), 141–161 (LPQV…FCAV), 213–233 (LIIG…GWLN), 234–254 (GLGA…IWQQ), and 268–288 (AFLN…LSYL).

This sequence belongs to the UbiA prenyltransferase family. The cofactor is Mg(2+).

Its subcellular location is the cell inner membrane. The catalysed reaction is all-trans-octaprenyl diphosphate + 4-hydroxybenzoate = 4-hydroxy-3-(all-trans-octaprenyl)benzoate + diphosphate. The protein operates within cofactor biosynthesis; ubiquinone biosynthesis. Its function is as follows. Catalyzes the prenylation of para-hydroxybenzoate (PHB) with an all-trans polyprenyl group. Mediates the second step in the final reaction sequence of ubiquinone-8 (UQ-8) biosynthesis, which is the condensation of the polyisoprenoid side chain with PHB, generating the first membrane-bound Q intermediate 3-octaprenyl-4-hydroxybenzoate. The protein is 4-hydroxybenzoate octaprenyltransferase of Cronobacter sakazakii (strain ATCC BAA-894) (Enterobacter sakazakii).